A 467-amino-acid polypeptide reads, in one-letter code: Acetaldehyde dehydrogenase (acetylating) EutE (467 aa).

The targets protein to the BMC stretch occupies residues 1 to 19 (MNQQDIEQVVKAVLLKMKD).

The protein belongs to the EutE/PduP family. In terms of assembly, interacts with EutS, which targets it to the interior of the BMC.

It is found in the bacterial microcompartment. The enzyme catalyses acetaldehyde + NAD(+) + CoA = acetyl-CoA + NADH + H(+). Its pathway is amine and polyamine degradation; ethanolamine degradation. In terms of biological role, acts as the second step in ethanolamine degradation by converting acetaldehyde into acetyl-CoA. Has a very strong preference for NAD(+) over NADP(+) in both catalytic directions. May play a role in bacterial microcompartment (BMC) assembly or maintenance. Directly targeted to the BMC. Expression of the eut operon allows this bacteria to use ethanolamine (EA) as a carbon, nitrogen and energy source. It relies on cobalamin (vitamin B12) both as a cofactor for the ethanolamine ammonia-lyase (EAL) activity and to induce the operon. EA enhances bacterial survival in macrophages in a concentration-dependent manner, suggesting it is an important nutrient during infection. This Salmonella typhimurium (strain LT2 / SGSC1412 / ATCC 700720) protein is Acetaldehyde dehydrogenase (acetylating) EutE.